The chain runs to 249 residues: Oxidoreductase asL5 (249 aa).

Residues isoleucine 21, lysine 45, asparagine 90, tyrosine 155, lysine 159, isoleucine 188, and threonine 190 each contribute to the NADP(+) site. The active-site Proton acceptor is tyrosine 155. Lysine 159 (lowers pKa of active site Tyr) is an active-site residue.

Belongs to the short-chain dehydrogenases/reductases (SDR) family.

Its function is as follows. Oxidoreductase; part of the gene cluster that mediates the biosynthesis of xenovulene A, an unusual meroterpenoid that has potent inhibitory effects on the human gamma-aminobutyrate A (GABAA) benzodiazepine receptor. The first step of xenovulene A biosynthesis is the biosynthesis of 3-methylorcinaldehyde performed by the non-reducing polyketide synthase aspks1. The salicylate hydroxylase asL1 then catalyzes the oxidative dearomatization of 3-methylorcinaldehyde to yield a dearomatized hydroxycyclohexadione. The 2-oxoglutarate-dependent dioxygenase asL3 further catalyzes the oxidative ring expansion to provide the first tropolone metabolite. The cytochrome P450 monooxygenase asR2 allows the synthesis of tropolone hemiacetal. In parallel, a previously unrecognised class of terpene cyclase, asR6, produces alpha-humulene from farnesylpyrophosphate (FPP). The putative Diels-Alderase asR5 probably catalyzes the formation of the tropolone-humulene skeleton by linking humulene and the polyketide moiety. Oxidative-ring contractions catalyzed by asL4 and asL6 then processively remove carbon atoms from the polyketide to yield xenovulene A. This chain is Oxidoreductase asL5, found in Sarocladium schorii (Acremonium strictum (strain IMI 501407)).